The chain runs to 467 residues: Dimethylamine methyltransferase MtbB3 (467 aa).

A non-standard amino acid (pyrrolysine) is located at residue pyrrolysine 356.

Belongs to the dimethylamine methyltransferase family.

The catalysed reaction is Co(I)-[dimethylamine-specific corrinoid protein] + dimethylamine + H(+) = methyl-Co(III)-[dimethylamine-specific corrinoid protein] + methylamine. It functions in the pathway one-carbon metabolism; methanogenesis from dimethylamine. In terms of biological role, catalyzes the transfer of a methyl group from dimethylamine to the corrinoid cofactor of MtbC. The sequence is that of Dimethylamine methyltransferase MtbB3 (mtbB3) from Methanosarcina mazei (strain ATCC BAA-159 / DSM 3647 / Goe1 / Go1 / JCM 11833 / OCM 88) (Methanosarcina frisia).